The chain runs to 360 residues: Peptide chain release factor 1 (360 aa).

Q237 is modified (N5-methylglutamine).

Belongs to the prokaryotic/mitochondrial release factor family. Methylated by PrmC. Methylation increases the termination efficiency of RF1.

It is found in the cytoplasm. Peptide chain release factor 1 directs the termination of translation in response to the peptide chain termination codons UAG and UAA. The protein is Peptide chain release factor 1 of Pseudomonas putida (strain ATCC 47054 / DSM 6125 / CFBP 8728 / NCIMB 11950 / KT2440).